Here is a 126-residue protein sequence, read N- to C-terminus: Glycine cleavage system H protein (126 aa).

In terms of domain architecture, Lipoyl-binding spans 19–100; that stretch reads DGKIGITDHA…AHAAWMVKVE (82 aa). Lys-60 is subject to N6-lipoyllysine.

The protein belongs to the GcvH family. As to quaternary structure, the glycine cleavage system is composed of four proteins: P, T, L and H. (R)-lipoate serves as cofactor.

The glycine cleavage system catalyzes the degradation of glycine. The H protein shuttles the methylamine group of glycine from the P protein to the T protein. The chain is Glycine cleavage system H protein from Koribacter versatilis (strain Ellin345).